The chain runs to 78 residues: Small ribosomal subunit protein bS18 (78 aa).

This sequence belongs to the bacterial ribosomal protein bS18 family. As to quaternary structure, part of the 30S ribosomal subunit. Forms a tight heterodimer with protein bS6.

In terms of biological role, binds as a heterodimer with protein bS6 to the central domain of the 16S rRNA, where it helps stabilize the platform of the 30S subunit. This Limosilactobacillus reuteri (strain DSM 20016) (Lactobacillus reuteri) protein is Small ribosomal subunit protein bS18.